A 191-amino-acid chain; its full sequence is Small ribosomal subunit protein eS7 (191 aa).

It belongs to the eukaryotic ribosomal protein eS7 family.

In Hordeum vulgare (Barley), this protein is Small ribosomal subunit protein eS7 (RPS7).